The following is a 139-amino-acid chain: ATP synthase epsilon chain (139 aa).

This sequence belongs to the ATPase epsilon chain family. In terms of assembly, F-type ATPases have 2 components, CF(1) - the catalytic core - and CF(0) - the membrane proton channel. CF(1) has five subunits: alpha(3), beta(3), gamma(1), delta(1), epsilon(1). CF(0) has three main subunits: a, b and c.

Its subcellular location is the cell membrane. Its function is as follows. Produces ATP from ADP in the presence of a proton gradient across the membrane. This chain is ATP synthase epsilon chain, found in Levilactobacillus brevis (strain ATCC 367 / BCRC 12310 / CIP 105137 / JCM 1170 / LMG 11437 / NCIMB 947 / NCTC 947) (Lactobacillus brevis).